The chain runs to 271 residues: Thiosulfate sulfurtransferase (271 aa).

2 Rhodanese domains span residues 21-129 (GAPE…ALDR) and 159-270 (GAAD…TPVE). Cys230 acts as the Cysteine persulfide intermediate in catalysis.

It is found in the cytoplasm. It catalyses the reaction thiosulfate + hydrogen cyanide = thiocyanate + sulfite + 2 H(+). Functionally, catalyzes the sulfur transfer reaction from thiosulfate to cyanide, thus converting cyanide to the less toxic thiocyanate. Contributes to P.aeruginosa survival under cyanogenic conditions, and thus provides the bacterium with a defense mechanism against endogenous cyanide toxicity. Is the main cytoplasmic rhodanese in P.aeruginosa, accounting for 90% of total rhodanese activity. This chain is Thiosulfate sulfurtransferase, found in Pseudomonas aeruginosa (strain ATCC 15692 / DSM 22644 / CIP 104116 / JCM 14847 / LMG 12228 / 1C / PRS 101 / PAO1).